The following is a 723-amino-acid chain: Peroxisomal bifunctional enzyme (723 aa).

Residues 1 to 282 form an enoyl-CoA hydratase / isomerase region; that stretch reads MAEYTRLHNA…LAERKANKWS (282 aa). The residue at position 38 (lysine 38) is an N6-succinyllysine. A substrate-binding site is contributed by glycine 101. Lysine 165 carries the N6-acetyllysine; alternate modification. N6-succinyllysine; alternate is present on lysine 165. An N6-acetyllysine modification is found at lysine 171. An N6-acetyllysine; alternate modification is found at lysine 219. An N6-succinyllysine; alternate modification is found at lysine 219. N6-acetyllysine is present on lysine 250. N6-succinyllysine is present on residues lysine 280 and lysine 290. The tract at residues 283 to 572 is 3-hydroxyacyl-CoA dehydrogenase; it reads TPSGASWKTA…DVLCELGRFG (290 aa). Residues lysine 346, lysine 350, and lysine 464 each carry the N6-acetyllysine modification. Lysine 532 is subject to N6-succinyllysine. Threonine 548 carries the phosphothreonine modification. An N6-succinyllysine modification is found at lysine 577. Lysine 584, lysine 591, and lysine 710 each carry N6-acetyllysine; alternate. Lysine 584, lysine 591, and lysine 710 each carry N6-succinyllysine; alternate. The segment at 699-723 is disordered; the sequence is KKLASQGNPPQKEWQSLAGSPSSKL. Polar residues predominate over residues 703–723; sequence SQGNPPQKEWQSLAGSPSSKL. Residue serine 718 is modified to Phosphoserine. The Microbody targeting signal motif lies at 721 to 723; it reads SKL. Lysine 722 carries the N6-succinyllysine modification.

In the N-terminal section; belongs to the enoyl-CoA hydratase/isomerase family. The protein in the C-terminal section; belongs to the 3-hydroxyacyl-CoA dehydrogenase family. As to quaternary structure, monomer. In terms of processing, acetylated, leading to enhanced enzyme activity. Acetylation is enhanced by up to 80% after treatment either with trichostin A (TSA) or with nicotinamide (NAM) with highest increase on Lys-346. Acetylation and enzyme activity increased by about 1.5% on addition of fatty acids.

It localises to the peroxisome. It carries out the reaction a (3S)-3-hydroxyacyl-CoA = a (2E)-enoyl-CoA + H2O. The catalysed reaction is a 4-saturated-(3S)-3-hydroxyacyl-CoA = a (3E)-enoyl-CoA + H2O. The enzyme catalyses a (3Z)-enoyl-CoA = a 4-saturated (2E)-enoyl-CoA. It catalyses the reaction a (3E)-enoyl-CoA = a 4-saturated (2E)-enoyl-CoA. It carries out the reaction a (3S)-3-hydroxyacyl-CoA + NAD(+) = a 3-oxoacyl-CoA + NADH + H(+). The catalysed reaction is (2S,3S)-3-hydroxy-2-methylbutanoyl-CoA = (2E)-2-methylbut-2-enoyl-CoA + H2O. The enzyme catalyses (3S)-hydroxyhexadecanoyl-CoA + NAD(+) = 3-oxohexadecanoyl-CoA + NADH + H(+). It catalyses the reaction (3S)-hydroxyhexadecanoyl-CoA = (2E)-hexadecenoyl-CoA + H2O. It carries out the reaction (2E)-hexadecenedioyl-CoA + H2O = (3S)-hydroxyhexadecanedioyl-CoA. The catalysed reaction is (3S)-hydroxyhexadecanedioyl-CoA + NAD(+) = 3-oxohexadecanedioyl-CoA + NADH + H(+). The enzyme catalyses (3E,5Z)-tetradecadienoyl-CoA = (2E,5Z)-tetradecadienoyl-CoA. It catalyses the reaction (3E,5Z)-octadienoyl-CoA = (2E,5Z)-octadienoyl-CoA. It carries out the reaction (3S)-hydroxydecanoyl-CoA + NAD(+) = 3-oxodecanoyl-CoA + NADH + H(+). The catalysed reaction is (3E)-decenoyl-CoA = (2E)-decenoyl-CoA. The enzyme catalyses (3Z)-hexenoyl-CoA = (2E)-hexenoyl-CoA. It catalyses the reaction (3E)-hexenoyl-CoA = (2E)-hexenoyl-CoA. It carries out the reaction (3S)-hydroxydecanoyl-CoA = (2E)-decenoyl-CoA + H2O. The catalysed reaction is (3S)-hydroxyhexanoyl-CoA = (2E)-hexenoyl-CoA + H2O. Its pathway is lipid metabolism; fatty acid beta-oxidation. With respect to regulation, enzyme activity enhanced by acetylation. Peroxisomal trifunctional enzyme possessing 2-enoyl-CoA hydratase, 3-hydroxyacyl-CoA dehydrogenase, and delta 3, delta 2-enoyl-CoA isomerase activities. Catalyzes two of the four reactions of the long chain fatty acids peroxisomal beta-oxidation pathway. Can also use branched-chain fatty acids such as 2-methyl-2E-butenoyl-CoA as a substrate, which is hydrated into (2S,3S)-3-hydroxy-2-methylbutanoyl-CoA. Optimal isomerase for 2,5 double bonds into 3,5 form isomerization in a range of enoyl-CoA species. Also able to isomerize both 3-cis and 3-trans double bonds into the 2-trans form in a range of enoyl-CoA species. Regulates the amount of medium-chain dicarboxylic fatty acids which are essential regulators of all fatty acid oxidation pathways. Also involved in the degradation of long-chain dicarboxylic acids through peroxisomal beta-oxidation. The polypeptide is Peroxisomal bifunctional enzyme (EHHADH) (Pongo abelii (Sumatran orangutan)).